The chain runs to 113 residues: Ribosome-binding factor A (113 aa).

This sequence belongs to the RbfA family. Monomer. Binds 30S ribosomal subunits, but not 50S ribosomal subunits or 70S ribosomes.

The protein resides in the cytoplasm. Its function is as follows. One of several proteins that assist in the late maturation steps of the functional core of the 30S ribosomal subunit. Associates with free 30S ribosomal subunits (but not with 30S subunits that are part of 70S ribosomes or polysomes). Required for efficient processing of 16S rRNA. May interact with the 5'-terminal helix region of 16S rRNA. This chain is Ribosome-binding factor A, found in Lactococcus lactis subsp. cremoris (Streptococcus cremoris).